The sequence spans 528 residues: Sodium-dependent lysophosphatidylcholine symporter 1 (528 aa).

Over 1–37 (MAGGGGAERVRVGAAAAGLLPPSCRQPRRRESRERLS) the chain is Cytoplasmic. Residues 38 to 66 (VCSKLCYAVGGAPYQTTGCALGFFLQIYL) traverse the membrane as a helical segment. At 67-73 (LDVAQLD) the chain is on the extracellular side. A helical transmembrane segment spans residues 74 to 99 (PFYASIILFVGRAWDAITDPMVGFFI). Residues 100–109 (SKTPWTRFGR) lie on the Cytoplasmic side of the membrane. The chain crosses the membrane as a helical span at residues 110 to 129 (LMPWIIFSTPFAVISYFLIW). Residues 130-138 (FVPDISTGQ) lie on the Extracellular side of the membrane. A helical transmembrane segment spans residues 139 to 161 (VMWYLIFYCIFQTLVTCFHVPYS). The Cytoplasmic portion of the chain corresponds to 162–176 (ALTMFISREQSERDS). The helical transmembrane segment at 177–199 (ATAYRMTVEVLGTVLGTAIQGQI) threads the bilayer. Residues 200–241 (VGKAVTPCIENPPFLSETNFSVAIRNVNMTHYTGSLADTRNA) are Extracellular-facing. The cysteines at positions 207 and 460 are disulfide-linked. 2 N-linked (GlcNAc...) asparagine glycosylation sites follow: asparagine 218 and asparagine 227. The helical transmembrane segment at 242–263 (YMVAAGVIGGLYILCAVILSVG) threads the bilayer. Residues 264-295 (VREKRESSELQSDEPVSFFRGLKLVMNHGAYI) lie on the Cytoplasmic side of the membrane. A helical transmembrane segment spans residues 296–319 (KLITGFLFTSLAFMLLEGNFALFC). At 320-328 (TYTLGFRNE) the chain is on the extracellular side. Residues 329-351 (FQNILLAIMLSATLTIPFWQWFL) traverse the membrane as a helical segment. Residues 352–355 (TRFG) lie on the Cytoplasmic side of the membrane. A helical membrane pass occupies residues 356 to 376 (KKTAVYVGISSAVPFLITVVV). The Extracellular portion of the chain corresponds to 377–381 (LDSNL). A helical membrane pass occupies residues 382–404 (VVTYIVAVAAGISVAAAFLLPWS). Topologically, residues 405 to 427 (MLPDVIDDFKLQHPESRGHEAIF) are cytoplasmic. The chain crosses the membrane as a helical span at residues 428–450 (FSFYVFFTKFTSGVSLGISTLSL). Residues 451–467 (DFAGYQTRGCSQPSEVN) are Extracellular-facing. A helical membrane pass occupies residues 468–490 (ITLKLLVSAVPVGLILLGLLLFK). Topologically, residues 491–528 (LYPIDEEKRRENKKALQDLREESNSSSESDSTELANIV) are cytoplasmic. Over residues 503–513 (KKALQDLREES) the composition is skewed to basic and acidic residues. A disordered region spans residues 503-528 (KKALQDLREESNSSSESDSTELANIV). Low complexity predominate over residues 514–528 (NSSSESDSTELANIV).

Belongs to the major facilitator superfamily.

It is found in the cell membrane. Its subcellular location is the endoplasmic reticulum membrane. It catalyses the reaction a 1-acyl-sn-glycero-3-phosphocholine(in) + Na(+)(in) = a 1-acyl-sn-glycero-3-phosphocholine(out) + Na(+)(out). It carries out the reaction 1-(4Z,7Z,10Z,13Z,16Z,19Z-docosahexaenoyl)-sn-glycero-3-phosphocholine(in) + Na(+)(in) = 1-(4Z,7Z,10Z,13Z,16Z,19Z-docosahexaenoyl)-sn-glycero-3-phosphocholine(out) + Na(+)(out). The catalysed reaction is 1-(9Z-octadecenoyl)-sn-glycero-3-phosphocholine(in) + Na(+)(in) = 1-(9Z-octadecenoyl)-sn-glycero-3-phosphocholine(out) + Na(+)(out). The enzyme catalyses 1-hexadecanoyl-sn-glycero-3-phosphocholine(in) + Na(+)(in) = 1-hexadecanoyl-sn-glycero-3-phosphocholine(out) + Na(+)(out). It catalyses the reaction a 1-acyl-sn-glycero-3-phosphoethanolamine(in) + Na(+)(in) = a 1-acyl-sn-glycero-3-phosphoethanolamine(out) + Na(+)(out). In terms of biological role, sodium-dependent lysophosphatidylcholine (LPC) symporter, which plays an essential role for blood-brain barrier formation and function. Specifically expressed in endothelium of the blood-brain barrier of micro-vessels and transports LPC into the brain. Transport of LPC is essential because it constitutes the major mechanism by which docosahexaenoic acid (DHA), an omega-3 fatty acid that is essential for normal brain growth and cognitive function, enters the brain. Transports LPC carrying long-chain fatty acids such LPC oleate and LPC palmitate with a minimum acyl chain length of 14 carbons. Does not transport docosahexaenoic acid in unesterified fatty acid. This is Sodium-dependent lysophosphatidylcholine symporter 1 from Gallus gallus (Chicken).